A 366-amino-acid chain; its full sequence is Uroporphyrinogen decarboxylase (366 aa).

Residues 28 to 32, Asp78, Tyr160, Thr215, and His333 each bind substrate; that span reads RQAGR.

Belongs to the uroporphyrinogen decarboxylase family. In terms of assembly, homodimer.

The protein resides in the cytoplasm. It carries out the reaction uroporphyrinogen III + 4 H(+) = coproporphyrinogen III + 4 CO2. The protein operates within porphyrin-containing compound metabolism; protoporphyrin-IX biosynthesis; coproporphyrinogen-III from 5-aminolevulinate: step 4/4. Catalyzes the decarboxylation of four acetate groups of uroporphyrinogen-III to yield coproporphyrinogen-III. The sequence is that of Uroporphyrinogen decarboxylase from Paraburkholderia xenovorans (strain LB400).